We begin with the raw amino-acid sequence, 183 residues long: Probable cobalt-precorrin-6B C(15)-methyltransferase (decarboxylating) (183 aa).

Residues Thr19, 43–47, Asp64, and Ala92 contribute to the S-adenosyl-L-methionine site; that span reads GCGSG.

It belongs to the methyltransferase superfamily. Archaeal-type CbiT family.

The enzyme catalyses Co-precorrin-6B + S-adenosyl-L-methionine = Co-precorrin-7 + S-adenosyl-L-homocysteine + CO2. It participates in cofactor biosynthesis; adenosylcobalamin biosynthesis; cob(II)yrinate a,c-diamide from sirohydrochlorin (anaerobic route): step 8/10. Functionally, catalyzes the methylation of C-15 in cobalt-precorrin-6B followed by the decarboxylation of C-12 to form cobalt-precorrin-7. This is Probable cobalt-precorrin-6B C(15)-methyltransferase (decarboxylating) from Methanocaldococcus jannaschii (strain ATCC 43067 / DSM 2661 / JAL-1 / JCM 10045 / NBRC 100440) (Methanococcus jannaschii).